Consider the following 53-residue polypeptide: ATP synthase protein 8 (53 aa).

Residues 5–25 form a helical membrane-spanning segment; it reads APISWLTLFFVFSITLVIFNI.

It belongs to the ATPase protein 8 family. As to quaternary structure, F-type ATPases have 2 components, CF(1) - the catalytic core - and CF(0) - the membrane proton channel.

It is found in the mitochondrion membrane. Mitochondrial membrane ATP synthase (F(1)F(O) ATP synthase or Complex V) produces ATP from ADP in the presence of a proton gradient across the membrane which is generated by electron transport complexes of the respiratory chain. F-type ATPases consist of two structural domains, F(1) - containing the extramembraneous catalytic core and F(0) - containing the membrane proton channel, linked together by a central stalk and a peripheral stalk. During catalysis, ATP synthesis in the catalytic domain of F(1) is coupled via a rotary mechanism of the central stalk subunits to proton translocation. Part of the complex F(0) domain. Minor subunit located with subunit a in the membrane. This is ATP synthase protein 8 from Aedes aegypti (Yellowfever mosquito).